We begin with the raw amino-acid sequence, 240 residues long: Triosephosphate isomerase (240 aa).

Substrate is bound at residue 6-8; the sequence is NLK. His-88 functions as the Electrophile in the catalytic mechanism. The active-site Proton acceptor is Glu-157. Substrate contacts are provided by Gly-163 and Ser-193.

It belongs to the triosephosphate isomerase family. As to quaternary structure, homodimer.

The protein resides in the cytoplasm. It catalyses the reaction D-glyceraldehyde 3-phosphate = dihydroxyacetone phosphate. It participates in carbohydrate biosynthesis; gluconeogenesis. Its pathway is carbohydrate degradation; glycolysis; D-glyceraldehyde 3-phosphate from glycerone phosphate: step 1/1. In terms of biological role, involved in the gluconeogenesis. Catalyzes stereospecifically the conversion of dihydroxyacetone phosphate (DHAP) to D-glyceraldehyde-3-phosphate (G3P). This is Triosephosphate isomerase from Sulfurimonas denitrificans (strain ATCC 33889 / DSM 1251) (Thiomicrospira denitrificans (strain ATCC 33889 / DSM 1251)).